The primary structure comprises 344 residues: Anthranilate phosphoribosyltransferase (344 aa).

5-phospho-alpha-D-ribose 1-diphosphate is bound by residues Gly80, Gly83–Asp84, Thr88, Asn90–Thr93, Lys108–Ser116, and Ser120. Gly80 serves as a coordination point for anthranilate. Ser92 contributes to the Mg(2+) binding site. Asn111 is a binding site for anthranilate. Anthranilate is bound at residue Arg166. Residues Asp225 and Glu226 each coordinate Mg(2+).

Belongs to the anthranilate phosphoribosyltransferase family. Homodimer. Mg(2+) is required as a cofactor.

It catalyses the reaction N-(5-phospho-beta-D-ribosyl)anthranilate + diphosphate = 5-phospho-alpha-D-ribose 1-diphosphate + anthranilate. It participates in amino-acid biosynthesis; L-tryptophan biosynthesis; L-tryptophan from chorismate: step 2/5. Catalyzes the transfer of the phosphoribosyl group of 5-phosphorylribose-1-pyrophosphate (PRPP) to anthranilate to yield N-(5'-phosphoribosyl)-anthranilate (PRA). This is Anthranilate phosphoribosyltransferase from Legionella pneumophila (strain Corby).